The primary structure comprises 556 residues: Arginine--tRNA ligase 2 (556 aa).

The 'HIGH' region motif lies at 132–142 (ANPTGDLHLGH).

The protein belongs to the class-I aminoacyl-tRNA synthetase family. As to quaternary structure, monomer.

It is found in the cytoplasm. It carries out the reaction tRNA(Arg) + L-arginine + ATP = L-arginyl-tRNA(Arg) + AMP + diphosphate. The sequence is that of Arginine--tRNA ligase 2 from Bacillus thuringiensis subsp. konkukian (strain 97-27).